The sequence spans 188 residues: Acireductone dioxygenase (188 aa).

His-97, His-99, Glu-103, and His-141 together coordinate Fe(2+). Ni(2+) contacts are provided by His-97, His-99, Glu-103, and His-141.

It belongs to the acireductone dioxygenase (ARD) family. Monomer. Fe(2+) serves as cofactor. The cofactor is Ni(2+).

The catalysed reaction is 1,2-dihydroxy-5-(methylsulfanyl)pent-1-en-3-one + O2 = 3-(methylsulfanyl)propanoate + CO + formate + 2 H(+). The enzyme catalyses 1,2-dihydroxy-5-(methylsulfanyl)pent-1-en-3-one + O2 = 4-methylsulfanyl-2-oxobutanoate + formate + 2 H(+). Its pathway is amino-acid biosynthesis; L-methionine biosynthesis via salvage pathway; L-methionine from S-methyl-5-thio-alpha-D-ribose 1-phosphate: step 5/6. In terms of biological role, catalyzes 2 different reactions between oxygen and the acireductone 1,2-dihydroxy-3-keto-5-methylthiopentene (DHK-MTPene) depending upon the metal bound in the active site. Fe-containing acireductone dioxygenase (Fe-ARD) produces formate and 2-keto-4-methylthiobutyrate (KMTB), the alpha-ketoacid precursor of methionine in the methionine recycle pathway. Ni-containing acireductone dioxygenase (Ni-ARD) produces methylthiopropionate, carbon monoxide and formate, and does not lie on the methionine recycle pathway. The chain is Acireductone dioxygenase from Xanthomonas euvesicatoria pv. vesicatoria (strain 85-10) (Xanthomonas campestris pv. vesicatoria).